The chain runs to 370 residues: Pantothenate kinase 3 (370 aa).

Residue E138 is the Proton acceptor of the active site. Positions 192, 195, and 207 each coordinate acetyl-CoA.

The protein belongs to the type II pantothenate kinase family. As to quaternary structure, homodimer. As to expression, highly expressed in the liver.

The protein localises to the cytoplasm. The catalysed reaction is (R)-pantothenate + ATP = (R)-4'-phosphopantothenate + ADP + H(+). Its pathway is cofactor biosynthesis; coenzyme A biosynthesis; CoA from (R)-pantothenate: step 1/5. With respect to regulation, subject to allosteric regulation, exists in two distinct conformational states, a catalytically incompetent (or open) conformation stabilized by the binding of acetyl(acyl)-CoA, and a catalytically competent (or closed) conformation stabilized by ATP-binding. Inhibited by acetyl-CoA and its thioesters which act as allosteric inhibitors and compete with the ATP-binding site. Inhibited by sulfonylureas and thiazolidinediones. Activated by oleoylethanolamide, palmitoyl-carnitine and oleoyl-carnitine. In terms of biological role, catalyzes the phosphorylation of pantothenate to generate 4'-phosphopantothenate in the first and rate-determining step of coenzyme A (CoA) synthesis. The protein is Pantothenate kinase 3 (PANK3) of Homo sapiens (Human).